The following is a 539-amino-acid chain: Glutamyl-tRNA(Gln) amidotransferase subunit A, mitochondrial (539 aa).

Residues lysine 94 and serine 181 each act as charge relay system in the active site. Catalysis depends on serine 205, which acts as the Acyl-ester intermediate.

It belongs to the amidase family. GatA subfamily. Subunit of the heterotrimeric GatCAB amidotransferase (AdT) complex, composed of A, B and C subunits.

Its subcellular location is the mitochondrion. It catalyses the reaction L-glutamyl-tRNA(Gln) + L-glutamine + ATP + H2O = L-glutaminyl-tRNA(Gln) + L-glutamate + ADP + phosphate + H(+). Its function is as follows. Allows the formation of correctly charged Gln-tRNA(Gln) through the transamidation of misacylated Glu-tRNA(Gln) in the mitochondria. The reaction takes place in the presence of glutamine and ATP through an activated gamma-phospho-Glu-tRNA(Gln). The chain is Glutamyl-tRNA(Gln) amidotransferase subunit A, mitochondrial from Mycosarcoma maydis (Corn smut fungus).